Consider the following 555-residue polypeptide: Dihydroxy-acid dehydratase (555 aa).

Asp78 contacts Mg(2+). Cys119 is a [2Fe-2S] cluster binding site. 2 residues coordinate Mg(2+): Asp120 and Lys121. Position 121 is an N6-carboxylysine (Lys121). Residue Cys195 participates in [2Fe-2S] cluster binding. A Mg(2+)-binding site is contributed by Glu444. Ser470 functions as the Proton acceptor in the catalytic mechanism.

Belongs to the IlvD/Edd family. In terms of assembly, homodimer. Requires [2Fe-2S] cluster as cofactor. It depends on Mg(2+) as a cofactor.

The enzyme catalyses (2R)-2,3-dihydroxy-3-methylbutanoate = 3-methyl-2-oxobutanoate + H2O. It catalyses the reaction (2R,3R)-2,3-dihydroxy-3-methylpentanoate = (S)-3-methyl-2-oxopentanoate + H2O. The protein operates within amino-acid biosynthesis; L-isoleucine biosynthesis; L-isoleucine from 2-oxobutanoate: step 3/4. It functions in the pathway amino-acid biosynthesis; L-valine biosynthesis; L-valine from pyruvate: step 3/4. In terms of biological role, functions in the biosynthesis of branched-chain amino acids. Catalyzes the dehydration of (2R,3R)-2,3-dihydroxy-3-methylpentanoate (2,3-dihydroxy-3-methylvalerate) into 2-oxo-3-methylpentanoate (2-oxo-3-methylvalerate) and of (2R)-2,3-dihydroxy-3-methylbutanoate (2,3-dihydroxyisovalerate) into 2-oxo-3-methylbutanoate (2-oxoisovalerate), the penultimate precursor to L-isoleucine and L-valine, respectively. This chain is Dihydroxy-acid dehydratase, found in Dehalococcoides mccartyi (strain CBDB1).